The primary structure comprises 174 residues: MGECDQILENDLWQGYKDQGFVVTQFSDLIERVLKWARSGSLWPMTFGLACCAVEMMHTAASRYDLDRYGIMFRASPRQADVMIVAGTLTNKMAPALRRVYDQMADPKYVISMGSCANGGGYYHYSYSVVRGCDRVVPVDIYVPGCPPTAEALLYGLLCLQQKILRNGQGTWRA.

Residues Cys51, Cys52, Cys116, and Cys146 each contribute to the [4Fe-4S] cluster site.

This sequence belongs to the complex I 20 kDa subunit family. NDH-1 is composed of 14 different subunits. Subunits NuoB, C, D, E, F, and G constitute the peripheral sector of the complex. [4Fe-4S] cluster is required as a cofactor.

It localises to the cell inner membrane. It carries out the reaction a quinone + NADH + 5 H(+)(in) = a quinol + NAD(+) + 4 H(+)(out). In terms of biological role, NDH-1 shuttles electrons from NADH, via FMN and iron-sulfur (Fe-S) centers, to quinones in the respiratory chain. The immediate electron acceptor for the enzyme in this species is believed to be ubiquinone. Couples the redox reaction to proton translocation (for every two electrons transferred, four hydrogen ions are translocated across the cytoplasmic membrane), and thus conserves the redox energy in a proton gradient. The chain is NADH-quinone oxidoreductase subunit B from Anaplasma phagocytophilum (strain HZ).